Reading from the N-terminus, the 87-residue chain is Pro-gurmarin (87 aa).

Residues 1-20 (MAKFAAIVLLILVASATVNA) form the signal peptide. Positions 21–52 (VKEHDELPTTGMSRKILLQPVFKSLIISIAEG) are excised as a propeptide. The residue at position 53 (Gln53) is a Pyrrolidone carboxylic acid. Cystine bridges form between Cys55–Cys70, Cys62–Cys75, and Cys69–Cys85.

In terms of tissue distribution, expressed in leaves (at protein level).

Functionally, peptide that strongly, but reversibly, suppresses the sweet taste-response to various sweeteners, including sugars, sweet amino acids and the artificial sweetener saccharin. In rodents, potentially binds to a sweet taste receptor present on apical microvilli of a subset of taste bud cells. Highly effective at blocking the sweet taste-response in rodents such as rats and mice, though mice may possess a mix of gurmarin-sensitive and -insensitive receptors. Has almost no effect on the sweet taste-response in humans. Inhibits Staphylococcus aureus biofilm formation without affecting bacterial viability. May be one of at least 9 different disulfide-rich peptides produced with varying properties. The chain is Pro-gurmarin from Gymnema sylvestre (Gurmar).